Reading from the N-terminus, the 158-residue chain is Ribosome maturation factor RimP (158 aa).

Belongs to the RimP family.

Its subcellular location is the cytoplasm. Its function is as follows. Required for maturation of 30S ribosomal subunits. The polypeptide is Ribosome maturation factor RimP (Leuconostoc mesenteroides subsp. mesenteroides (strain ATCC 8293 / DSM 20343 / BCRC 11652 / CCM 1803 / JCM 6124 / NCDO 523 / NBRC 100496 / NCIMB 8023 / NCTC 12954 / NRRL B-1118 / 37Y)).